The following is a 120-amino-acid chain: Neuromedin-B (120 aa).

The signal sequence occupies residues 1-29 (MSAVPLTRMLPLRFLTHLLLLSFIPLYFC). A propeptide spanning residues 30–44 (MEFSEDARNIEKIRR) is cleaved from the precursor. M54 carries the methionine amide modification. Positions 58 to 120 (SLQDTYNPSE…MDDYIKTTQK (63 aa)) are excised as a propeptide.

Belongs to the bombesin/neuromedin-B/ranatensin family. In terms of tissue distribution, brain, intestine, and ovaries and early embryos (stages 2 and 10).

It is found in the secreted. Stimulates smooth muscle contraction. The sequence is that of Neuromedin-B (nmb) from Xenopus laevis (African clawed frog).